Consider the following 2414-residue polypeptide: Centrosome-associated protein CEP250 (2414 aa).

Coiled-coil stretches lie at residues 91–153 (EEPN…ELVR) and 248–357 (LVAK…VEEE). 7 disordered regions span residues 356–384 (EEDTVTQSSGHEDSLQSDCNGLSQFDPQD), 672–707 (AEEAGAELQAELRGTREEKEELKDKLSEAHHQQETA), 1191–1212 (SRPELRGGGDSAPTLWGPDPDQ), 1269–1303 (EAQKSQVHSELQDLQRQLSQSQEEKSKWEGRQNSL), 2050–2071 (AGARRSQENGIQEKQSLEQERQ), 2194–2238 (ALEE…KERL), and 2275–2317 (RERR…GSSD). The segment covering 371–381 (QSDCNGLSQFD) has biased composition (polar residues). Residues 400 to 1165 (QQAVQDLRQQ…QLEALVAEQQ (766 aa)) adopt a coiled-coil conformation. A compositionally biased stretch (basic and acidic residues) spans 684–704 (RGTREEKEELKDKLSEAHHQQ). Coiled-coil stretches lie at residues 1237 to 2200 (LQKL…EQQS) and 2231 to 2290 (GVEE…ASRA). Residues 1280 to 1289 (QDLQRQLSQS) are compositionally biased toward low complexity. The span at 2196–2209 (EEQQSGGPHSTSRA) shows a compositional bias: polar residues. Basic and acidic residues predominate over residues 2275 to 2286 (RERRKLKRDSVR). Ser2292 carries the phosphoserine modification. Residues 2305 to 2317 (QQDGRGSQRGSSD) are compositionally biased toward low complexity. The stretch at 2320 to 2345 (LVVELQREVALLRAQLALERKQRQDY) forms a coiled coil. Residues Ser2389 and Ser2393 each carry the phosphoserine; by NEK2 modification. The tract at residues 2390-2414 (LNQSLTSPGPCLLHPSLDTTQNTHR) is disordered.

In terms of assembly, monomer and homodimer. Forms a complex in vitro with both NEK2 kinase and the PPP1CC catalytic subunit of protein phosphatase 1 (PP1). Interacts with CEP135. Interacts with CROCC/rootletin. Interacts with CNTLN. Interacts with NIN (via C-terminus). Differentially phosphorylated during cell cycle. Phosphorylation may regulate association/dissociation from centrosome. During M phase of mitosis, C-terminal part is phosphorylated by NEK2, suggesting that it may trigger the dissociation from the mitotic centrosome. Dephosphorylated in vitro by the PP1 phosphatase. As to expression, expressed in the retina.

The protein resides in the cytoplasm. It localises to the perinuclear region. The protein localises to the cytoskeleton. Its subcellular location is the microtubule organizing center. It is found in the centrosome. The protein resides in the centriole. It localises to the cilium basal body. The protein localises to the cell projection. Its subcellular location is the cilium. It is found in the photoreceptor outer segment. The protein resides in the photoreceptor inner segment. Functionally, plays an important role in centrosome cohesion during interphase. Recruits CCDC102B to the proximal ends of centrioles. Maintains centrosome cohesion by forming intercentriolar linkages. Accumulates at the proximal end of each centriole, forming supramolecular assemblies with viscous material properties that promote organelle cohesion. May be involved in ciliogenesis. The sequence is that of Centrosome-associated protein CEP250 (Cep250) from Mus musculus (Mouse).